We begin with the raw amino-acid sequence, 366 residues long: Nitronate monooxygenase (366 aa).

FMN is bound by residues Asn74, Gln181, Gly186, Gly223, and 242-245 (QLGT).

This sequence belongs to the nitronate monooxygenase family. NMO class I subfamily. Requires FMN as cofactor.

The enzyme catalyses 3 propionate 3-nitronate + 3 O2 + H2O = 3 3-oxopropanoate + 2 nitrate + nitrite + H2O2 + 3 H(+). Nitronate monooxygenase that uses molecular oxygen to catalyze the oxidative denitrification of alkyl nitronates. Acts on propionate 3-nitronate (P3N), the presumed physiological substrate. Is likely involved in the degradation of P3N, that allows B.phytofirmans PsJN to grow on 3-nitropropionate/P3N as the sole source of nitrogen and carbon. Also probably functions in the detoxification of P3N, a metabolic poison produced by plants and fungi as a defense mechanism. Cannot oxidize nitroalkanes such as 3-nitropropionate, nitroethane, or 1-nitropropane. The sequence is that of Nitronate monooxygenase from Paraburkholderia phytofirmans (strain DSM 17436 / LMG 22146 / PsJN) (Burkholderia phytofirmans).